A 105-amino-acid polypeptide reads, in one-letter code: Tyrosine-protein phosphatase 12 (105 aa).

One can recognise a Tyrosine-protein phosphatase domain in the interval 1 to 105 (WRMIWEKRVE…NLRRIVRTEF (105 aa)). D84 contacts substrate.

The protein belongs to the protein-tyrosine phosphatase family.

The catalysed reaction is O-phospho-L-tyrosyl-[protein] + H2O = L-tyrosyl-[protein] + phosphate. In Styela plicata (Wrinkled sea squirt), this protein is Tyrosine-protein phosphatase 12 (STY-12).